A 594-amino-acid polypeptide reads, in one-letter code: Suppressor of hairless protein (594 aa).

The interval 20–87 is disordered; that stretch reads ETTVVNPNGS…QQQQQHQQQM (68 aa). Positions 58 to 87 are enriched in low complexity; that stretch reads QQQQQQLQVHHQQQQQQQQQQQQQQHQQQM. 3 DNA-binding regions span residues 131–141, 239–244, and 266–271; these read QKSYGNEKRFF, SKPSKK, and RLRSQT. An IPT/TIG domain is found at 429–519; sequence PIVNSLNLNG…YATGLTFTYT (91 aa). Composition is skewed to low complexity over residues 542–562 and 569–580; these read NNNN…AGSP and QQQQQQHQALPS. The segment at 542 to 594 is disordered; the sequence is NNNNNITSISNNNNSNNAGSPAAGGGLQQQQQQHQALPSISEVQWNSHGSGLS. Residues 582-594 are compositionally biased toward polar residues; the sequence is SEVQWNSHGSGLS.

The protein belongs to the Su(H) family. In terms of assembly, interacts with activated cleaved Notch. Interacts with Hairless, this interaction preventing its DNA-binding activity. Interacts with insv (via BEN domain).

It localises to the nucleus. It is found in the cytoplasm. Transcriptional regulator that plays a central role in Notch signaling, a signaling pathway involved in cell-cell communication that regulates a broad spectrum of cell-fate determinations. Binds directly the 5'-GTGRGAR-3' DNA consensus sequence, which is present in the regulatory region of several genes. Acts as a transcriptional repressor when it is not associated with Notch proteins. When associated with some Notch protein, it acts as a transcriptional activator that activates transcription of Notch target genes. Required for transcription of Sim. Specifically binds to the immunoglobulin kappa-type J segment recombination signal sequence. Required for neurogenesis in imaginal disks. In the larval brain, might play a role as a transducer of Notch signaling during type II neuroblast development. Also functions independently of the Notch pathway, in the development of the bristle sensory organ precursor cell. The protein is Suppressor of hairless protein (Su(H)) of Drosophila melanogaster (Fruit fly).